The primary structure comprises 287 residues: F420-non-reducing hydrogenase vhu subunit G (287 aa).

It belongs to the [NiFe]/[NiFeSe] hydrogenase small subunit family. The F420-non-reducing hydrogenase vhu is composed of four subunits; VhuA, VhuD, VhuG and VhuU.

The polypeptide is F420-non-reducing hydrogenase vhu subunit G (vhuG) (Methanococcus voltae).